The chain runs to 463 residues: mRNA-capping enzyme subunit alpha (463 aa).

Lys66 (N6-GMP-lysine intermediate) is an active-site residue. Residues 404-463 (WEERKSKKRTHSSISGPMLPPVAETKAPREATQSRYIDDEDWSDEADDDDEDSLKRARIE) form a disordered region. Acidic residues predominate over residues 441 to 455 (DDEDWSDEADDDDED).

The protein belongs to the eukaryotic GTase family. As to quaternary structure, heterodimer. The mRNA-capping enzyme is composed of two separate chains alpha and beta, respectively a mRNA guanylyltransferase and an mRNA 5'-triphosphate monophosphatase.

Its subcellular location is the nucleus. It catalyses the reaction a 5'-end diphospho-ribonucleoside in mRNA + GTP + H(+) = a 5'-end (5'-triphosphoguanosine)-ribonucleoside in mRNA + diphosphate. Its function is as follows. Second step of mRNA capping. Transfer of the GMP moiety of GTP to the 5'-end of RNA via an enzyme-GMP covalent reaction intermediate. In Eremothecium gossypii (strain ATCC 10895 / CBS 109.51 / FGSC 9923 / NRRL Y-1056) (Yeast), this protein is mRNA-capping enzyme subunit alpha (CEG1).